The following is a 207-amino-acid chain: KSRLYFAVTVLMCAFVSINGVGLNDLLERASQLSDKLHSLSTSLTNDLDSHFPPVGRVMMPRPSMCHTSSLQIPNDKDQALKVPEDELLSLARSLLLAWSDPLALLSSKASSLAHPERNTINSKTKELQDNINSLVPGLEHVVHKMGSSSDNLSSLPFYSNSLGQDKTSRLVNFHFLLSCFRRDSHKIDSFLKVLRCRAAKKRPEMC.

The first 20 residues, 1 to 20 (KSRLYFAVTVLMCAFVSING), serve as a signal peptide directing secretion. Cystine bridges form between C66/C180 and C197/C207.

This sequence belongs to the somatotropin/prolactin family. As to expression, pituitary gland.

The protein resides in the secreted. The polypeptide is Prolactin (prl) (Hypophthalmichthys molitrix (Silver carp)).